A 215-amino-acid chain; its full sequence is Pyrrolidone-carboxylate peptidase (215 aa).

Catalysis depends on residues E80, C143, and H167.

This sequence belongs to the peptidase C15 family. As to quaternary structure, homotetramer.

It is found in the cytoplasm. It catalyses the reaction Release of an N-terminal pyroglutamyl group from a polypeptide, the second amino acid generally not being Pro.. Removes 5-oxoproline from various penultimate amino acid residues except L-proline. The protein is Pyrrolidone-carboxylate peptidase of Bacillus mycoides (strain KBAB4) (Bacillus weihenstephanensis).